The primary structure comprises 893 residues: Serine/threonine-protein kinase/endoribonuclease IRE1 (893 aa).

The N-terminal stretch at 1–19 (MRSLRRVLLQLVLLAGVAF) is a signal peptide. Residues 20-379 (RGVRFDDAAD…NSVTKFSYRW (360 aa)) are Lumenal-facing. Asparagine 105, asparagine 158, asparagine 259, and asparagine 351 each carry an N-linked (GlcNAc...) asparagine glycan. A helical membrane pass occupies residues 380-397 (LFPTFLMLLIMACLVKLA). Over 398 to 893 (DASKYCRQFV…FSKYFLGSSA (496 aa)) the chain is Cytoplasmic. The disordered stretch occupies residues 451 to 478 (ASDKEGNGTGGSTEAQSNKAHDSTNVEL). The region spanning 491–759 (CVYSKEIGKG…AVYVMHHPFF (269 aa)) is the Protein kinase domain. ATP-binding positions include 497 to 505 (IGKGSNGTV) and lysine 519. Aspartate 625 serves as the catalytic Proton acceptor. Residues 762 to 890 (PELCLSFLRD…EEAFSKYFLG (129 aa)) enclose the KEN domain.

It belongs to the protein kinase superfamily. Ser/Thr protein kinase family. As to quaternary structure, homodimer; disulfide-linked. Dimer formation is driven by hydrophobic interactions within the N-terminal luminal domains and stabilized by disulfide bridges. In terms of processing, autophosphorylated. In terms of tissue distribution, expressed in roots, nodes, internodes, leaf sheaths, leaf blades, young ears and mature ears.

It is found in the endoplasmic reticulum membrane. It catalyses the reaction L-seryl-[protein] + ATP = O-phospho-L-seryl-[protein] + ADP + H(+). The catalysed reaction is L-threonyl-[protein] + ATP = O-phospho-L-threonyl-[protein] + ADP + H(+). Its function is as follows. Involved in endoplasmic reticulum (ER) stress response. Senses unfolded proteins in the lumen of the ER via its N-terminal domain which leads to enzyme auto-activation. The active endoribonuclease domain splices bZIP50 mRNA to generate a new C-terminus, converting it into a potent unfolded-protein response (UPR) transcriptional activator, which then induces transcription of UPR target genes, such as luminal-binding protein (BiP) chaperones. This is Serine/threonine-protein kinase/endoribonuclease IRE1 from Oryza sativa subsp. japonica (Rice).